The chain runs to 685 residues: Invasion protein InvA (685 aa).

Helical transmembrane passes span 17 to 37, 39 to 59, 61 to 81, 110 to 130, 197 to 217, 235 to 255, 274 to 294, and 295 to 315; these read ILVL…TYLV, FLIA…FYID, ILSF…RLAL, SLAV…IVIT, AIAG…VGMT, IGDG…AGFI, LLNN…MGTL, and PGFP…LFYF.

This sequence belongs to the FHIPEP (flagella/HR/invasion proteins export pore) family.

The protein localises to the cell inner membrane. In terms of biological role, involved in the invasion of the cells of the intestinal epithelium. Could be involved in the translocation of the InvE protein. The chain is Invasion protein InvA (invA) from Salmonella typhi.